The sequence spans 98 residues: NADH-ubiquinone oxidoreductase chain 4L (98 aa).

A run of 3 helical transmembrane segments spans residues 2–22 (TSAF…TFMF), 26–46 (LMST…MTST), and 59–79 (IPIT…ALLV).

The protein belongs to the complex I subunit 4L family. As to quaternary structure, core subunit of respiratory chain NADH dehydrogenase (Complex I) which is composed of 45 different subunits.

It localises to the mitochondrion inner membrane. It carries out the reaction a ubiquinone + NADH + 5 H(+)(in) = a ubiquinol + NAD(+) + 4 H(+)(out). Functionally, core subunit of the mitochondrial membrane respiratory chain NADH dehydrogenase (Complex I) which catalyzes electron transfer from NADH through the respiratory chain, using ubiquinone as an electron acceptor. Part of the enzyme membrane arm which is embedded in the lipid bilayer and involved in proton translocation. This is NADH-ubiquinone oxidoreductase chain 4L from Rattus norvegicus (Rat).